A 474-amino-acid chain; its full sequence is UDP-N-acetylmuramoylalanine--D-glutamate ligase (474 aa).

134-140 contacts ATP; sequence GSNGKST.

The protein belongs to the MurCDEF family.

The protein localises to the cytoplasm. It carries out the reaction UDP-N-acetyl-alpha-D-muramoyl-L-alanine + D-glutamate + ATP = UDP-N-acetyl-alpha-D-muramoyl-L-alanyl-D-glutamate + ADP + phosphate + H(+). The protein operates within cell wall biogenesis; peptidoglycan biosynthesis. Functionally, cell wall formation. Catalyzes the addition of glutamate to the nucleotide precursor UDP-N-acetylmuramoyl-L-alanine (UMA). In Thiobacillus denitrificans (strain ATCC 25259 / T1), this protein is UDP-N-acetylmuramoylalanine--D-glutamate ligase.